A 389-amino-acid polypeptide reads, in one-letter code: 2-aminoethylphosphonate--pyruvate transaminase 1 (389 aa).

K196 carries the N6-(pyridoxal phosphate)lysine modification.

Belongs to the class-V pyridoxal-phosphate-dependent aminotransferase family. PhnW subfamily. Homodimer. It depends on pyridoxal 5'-phosphate as a cofactor.

The catalysed reaction is (2-aminoethyl)phosphonate + pyruvate = phosphonoacetaldehyde + L-alanine. Functionally, involved in phosphonate degradation. In Paraburkholderia xenovorans (strain LB400), this protein is 2-aminoethylphosphonate--pyruvate transaminase 1.